The following is a 123-amino-acid chain: MSATQASSQQADSKAPADIIGQLQRAASAEEFFQLLDVAYDPNVVNVARLHILKRMGQYLAGEDLAGLPAAEATARCKAVLERAYADFVASTPLDQRVFKVLKDAVAPKSPRAPAFVSLDALK.

Belongs to the NifW family. Homotrimer; associates with NifD.

Its function is as follows. May protect the nitrogenase Fe-Mo protein from oxidative damage. This Rhodopseudomonas palustris (strain HaA2) protein is Nitrogenase-stabilizing/protective protein NifW.